The chain runs to 493 residues: Guanosine-5'-triphosphate,3'-diphosphate pyrophosphatase (493 aa).

The protein belongs to the GppA/Ppx family. GppA subfamily.

The catalysed reaction is guanosine 3'-diphosphate 5'-triphosphate + H2O = guanosine 3',5'-bis(diphosphate) + phosphate + H(+). It functions in the pathway purine metabolism; ppGpp biosynthesis; ppGpp from GTP: step 2/2. Its function is as follows. Catalyzes the conversion of pppGpp to ppGpp. Guanosine pentaphosphate (pppGpp) is a cytoplasmic signaling molecule which together with ppGpp controls the 'stringent response', an adaptive process that allows bacteria to respond to amino acid starvation, resulting in the coordinated regulation of numerous cellular activities. The protein is Guanosine-5'-triphosphate,3'-diphosphate pyrophosphatase of Salmonella paratyphi B (strain ATCC BAA-1250 / SPB7).